We begin with the raw amino-acid sequence, 51 residues long: Insulin (51 aa).

Intrachain disulfides connect cysteine 8-cysteine 37, cysteine 20-cysteine 50, and cysteine 36-cysteine 41.

It belongs to the insulin family. In terms of assembly, heterodimer of a B chain and an A chain linked by two disulfide bonds.

It is found in the secreted. Functionally, insulin decreases blood glucose concentration. It increases cell permeability to monosaccharides, amino acids and fatty acids. It accelerates glycolysis, the pentose phosphate cycle, and glycogen synthesis in liver. The sequence is that of Insulin (ins) from Platichthys flesus (European flounder).